The chain runs to 160 residues: MVKVKVERSEDADESVVASGDVTIKEEESYDDKLIFVNAIAKPMAGKKLAKKCYKLVKKAMKHKTFLRNGLKDVQTRLRKGETGICIFAGDVTPVDIMCHLPAVCEEKGIPYAYTPSRADLGAAMGVKRGTVALLVRQNDEYKDLYDEVKEELSALNIPV.

It belongs to the eukaryotic ribosomal protein eL8 family. In terms of assembly, component of the small nucleolar ribonucleoprotein particle containing H/ACA-type snoRNAs (H/ACA snoRNPs).

Its subcellular location is the nucleus. The protein resides in the nucleolus. In terms of biological role, required for ribosome biogenesis. Part of a complex which catalyzes pseudouridylation of rRNA. This involves the isomerization of uridine such that the ribose is subsequently attached to C5, instead of the normal N1. Pseudouridine ('psi') residues may serve to stabilize the conformation of rRNAs. This chain is H/ACA ribonucleoprotein complex subunit 2-like protein (NHP2), found in Drosophila yakuba (Fruit fly).